A 526-amino-acid polypeptide reads, in one-letter code: MNEHLHVGSHGQIQVQQLFEDNSNKRTVLTTQPNGLTTLGKSGLPVVQDRQSESAHRRQGSSSSLKSTDGTGKVKASVMTPEQAMKQYMQKLTTFEHNEIFGYTEIYFLGPNAKKRQGVIGGPNNCGYDDDQGSYIQVPHDHIAYRYEVLKVIGKGSFGQVVKAYDHKMHQHVALKMVRNEKRFHRQAAEEIRILEHLRKQDKDNNMNVIHMLENFTFRSHICMTFELLSMNLYELIKKNKFQGFSLPLVRKFAHSILQCLDALHKNRIIHCDLKPENILLKQQGRSGIKVIDFGSSCYEHQRVYTYIQSRFYRAPEVILGARYGMPIDMWSLGCILAELLTGYPLLPGEDEGDQLACMIELLGMPSPKLLDSSKRAKNFVSSKGYPRYCTITTLSDGSIILNGGRSRRGKLRGPPESREWGNALKGCDDPLFLDFLKQCLEWDPAIRMTPSQALRHPWLRRRLPKPPTGEKASAKRITESTGAITSISKLPPTSSSASKLRTNLAQMTDANGNIQQRTVLPKLVS.

Composition is skewed to polar residues over residues 30-40 (TTQPNGLTTLG) and 60-70 (GSSSSLKSTDG). The segment at 30–76 (TTQPNGLTTLGKSGLPVVQDRQSESAHRRQGSSSSLKSTDGTGKVKA) is disordered. Thr31 bears the Phosphothreonine; by ATM mark. The Nuclear localization signal signature appears at 114–116 (KKR). The region spanning 147-460 (YEVLKVIGKG…PSQALRHPWL (314 aa)) is the Protein kinase domain. ATP contacts are provided by residues 153 to 161 (IGKGSFGQV), Lys176, and 226 to 229 (FELL). Asp273 functions as the Proton acceptor in the catalytic mechanism. Tyr307 carries the phosphotyrosine modification. At Ser367 the chain carries Phosphoserine; by ATM. Residues 462-499 (RRLPKPPTGEKASAKRITESTGAITSISKLPPTSSSAS) are disordered. The span at 480–499 (ESTGAITSISKLPPTSSSAS) shows a compositional bias: polar residues.

This sequence belongs to the protein kinase superfamily. CMGC Ser/Thr protein kinase family. MNB/DYRK subfamily. In terms of assembly, interacts with MDM2. Requires Mg(2+) as cofactor. It depends on Mn(2+) as a cofactor. Phosphorylated on serine/threonine residues. Phosphorylation on Thr-31 and Ser-367 by ATM in response to genotoxic stress disrupts MDM2 binding and prevents MDM2-mediated ubiquitination and subsequent proteasome degradation, thus promoting p53/TP53-mediated apoptosis. Post-translationally, ubiquitination in nucleus by MDM2 in normal conditions leads to proteasome degradation.

The protein localises to the cytoplasm. It localises to the nucleus. The catalysed reaction is L-seryl-[protein] + ATP = O-phospho-L-seryl-[protein] + ADP + H(+). The enzyme catalyses L-threonyl-[protein] + ATP = O-phospho-L-threonyl-[protein] + ADP + H(+). It carries out the reaction L-tyrosyl-[protein] + ATP = O-phospho-L-tyrosyl-[protein] + ADP + H(+). Its activity is regulated as follows. Autophosphorylates on tyrosine residues. In terms of biological role, serine/threonine-protein kinase involved in the control of mitotic transition and the regulation of cellular growth and/or development. In Gallus gallus (Chicken), this protein is Dual specificity tyrosine-phosphorylation-regulated kinase 2.